The chain runs to 98 residues: MLTRFITDVSTRFNPFSAKAKAARLFLSFLPPNARSNGMNITTQLLPRNSTETPLLYVKFKDGKEMNLDVENMGIKSIVEEVDRHSRILQKQADLNDG.

It belongs to the mitochondrion-specific ribosomal protein mL53 family. As to quaternary structure, component of the mitochondrial large ribosomal subunit (mt-LSU). Mature N.crassa 74S mitochondrial ribosomes consist of a small (37S) and a large (54S) subunit. The 37S small subunit contains a 16S ribosomal RNA (16S mt-rRNA) and 32 different proteins. The 54S large subunit contains a 23S rRNA (23S mt-rRNA) and 42 different proteins.

The protein resides in the mitochondrion. In terms of biological role, component of the mitochondrial ribosome (mitoribosome), a dedicated translation machinery responsible for the synthesis of mitochondrial genome-encoded proteins, including at least some of the essential transmembrane subunits of the mitochondrial respiratory chain. The mitoribosomes are attached to the mitochondrial inner membrane and translation products are cotranslationally integrated into the membrane. This is Large ribosomal subunit protein mL53 (mrpl44) from Neurospora crassa (strain ATCC 24698 / 74-OR23-1A / CBS 708.71 / DSM 1257 / FGSC 987).